A 385-amino-acid polypeptide reads, in one-letter code: Probable endopeptidase MT2245 (385 aa).

The segment covering 235–257 (AALPPGAPPGDGPAPGVAPPPGG) has biased composition (pro residues). A disordered region spans residues 235-268 (AALPPGAPPGDGPAPGVAPPPGGMPGLPFVQPDG). Positions 270 to 385 (GGDRTAVVQA…SGPIYDARRY (116 aa)) constitute a NlpC/P60 domain. C300 serves as the catalytic Nucleophile. H348 serves as the catalytic Proton acceptor. The active site involves H360.

Belongs to the peptidase C40 family.

The chain is Probable endopeptidase MT2245 from Mycobacterium tuberculosis (strain CDC 1551 / Oshkosh).